Reading from the N-terminus, the 135-residue chain is uncharacterized protein (135 aa).

The protein belongs to the MG067/MG068/MG395 family.

This is an uncharacterized protein from Mycoplasma pneumoniae (strain ATCC 29342 / M129 / Subtype 1) (Mycoplasmoides pneumoniae).